Consider the following 1235-residue polypeptide: ATP-dependent helicase/nuclease subunit A (1235 aa).

The region spanning 12-482 is the UvrD-like helicase ATP-binding domain; it reads TLWTDDQWKA…IDLSQNFRSR (471 aa). Residue 33-40 participates in ATP binding; it reads AAAGSGKT. A UvrD-like helicase C-terminal domain is found at 509–800; the sequence is AAELTLGANF…RMMTIHASKG (292 aa).

The protein belongs to the helicase family. AddA subfamily. As to quaternary structure, heterodimer of AddA and AddB/RexB. It depends on Mg(2+) as a cofactor.

The catalysed reaction is Couples ATP hydrolysis with the unwinding of duplex DNA by translocating in the 3'-5' direction.. The enzyme catalyses ATP + H2O = ADP + phosphate + H(+). In terms of biological role, the heterodimer acts as both an ATP-dependent DNA helicase and an ATP-dependent, dual-direction single-stranded exonuclease. Recognizes the chi site generating a DNA molecule suitable for the initiation of homologous recombination. The AddA nuclease domain is required for chi fragment generation; this subunit has the helicase and 3' -&gt; 5' nuclease activities. This chain is ATP-dependent helicase/nuclease subunit A, found in Listeria welshimeri serovar 6b (strain ATCC 35897 / DSM 20650 / CCUG 15529 / CIP 8149 / NCTC 11857 / SLCC 5334 / V8).